Consider the following 853-residue polypeptide: Trimethylguanosine synthase (853 aa).

A disordered region spans residues 53–80 (NNSGDQATEEEEGGYSCGTAESHDSKGI). Residue serine 55 is modified to Phosphoserine. At threonine 60 the chain carries Phosphothreonine. Serine 85, serine 89, serine 96, and serine 141 each carry phosphoserine. Tyrosine 146 bears the Phosphotyrosine mark. Positions 149–187 (DDILASDDPSSIEQYENTRTYELQSKKDTETENPPVENT) are disordered. A Phosphoserine modification is found at serine 154. Residues 156 to 171 (DPSSIEQYENTRTYEL) are compositionally biased toward polar residues. The residue at position 189 (serine 189) is a Phosphoserine. 2 disordered regions span residues 334–461 (SQLD…GGIP) and 527–632 (DEEA…KKVN). Residues 367-382 (NGGTNEESNSSGNTNT) show a composition bias toward low complexity. 3 positions are modified to phosphoserine: serine 412, serine 438, and serine 578. Residues 431 to 442 (DIDENPASDFDD) show a composition bias toward acidic residues. Residues 564–578 (ETNNPEPEKCQSVSS) are compositionally biased toward polar residues. Residues 608 to 619 (PDSRQAETEAEV) are compositionally biased toward basic and acidic residues. A compositionally biased stretch (basic residues) spans 620–630 (KKKKNKKKNKK). A sufficient for catalytic activity region spans residues 631–846 (VNGLPPEIAA…TITAYFGDLI (216 aa)). Aspartate 719 contacts S-adenosyl-L-methionine. Tryptophan 766 contacts N(7)-methylguanosine.

Belongs to the methyltransferase superfamily. Trimethylguanosine synthase family. May form homooligomers. Interacts with CREBBP/CBP, EED/WAIT1, EP300/P300, NCOA6/PRIP, PPARBP/PBP and SMN. In terms of tissue distribution, ubiquitously expressed. High expression in heart, skeletal muscle, kidney, liver and placenta.

It localises to the cytoplasm. The protein resides in the nucleus. Its subcellular location is the cajal body. It is found in the nucleolus. It catalyses the reaction a 5'-end (N(7)-methyl 5'-triphosphoguanosine)-ribonucleoside in snRNA + S-adenosyl-L-methionine = a 5'-end (N(2),N(7)-dimethyl 5'-triphosphoguanosine)-ribonucleoside in snRNA + S-adenosyl-L-homocysteine + H(+). It carries out the reaction a 5'-end (N(7)-methyl 5'-triphosphoguanosine)-ribonucleoside in snoRNA + S-adenosyl-L-methionine = a 5'-end (N(2),N(7)-dimethyl 5'-triphosphoguanosine)-ribonucleoside in snoRNA + S-adenosyl-L-homocysteine + H(+). The enzyme catalyses a 5'-end (N(2),N(7)-dimethyl 5'-triphosphoguanosine)-ribonucleoside in snRNA + S-adenosyl-L-methionine = a 5'-end (N(2),N(2),N(7)-trimethyl 5'-triphosphoguanosine)-ribonucleoside in snRNA + S-adenosyl-L-homocysteine + H(+). The catalysed reaction is a 5'-end (N(2),N(7)-dimethyl 5'-triphosphoguanosine)-ribonucleoside in snoRNA + S-adenosyl-L-methionine = a 5'-end (N(2),N(2),N(7)-trimethyl 5'-triphosphoguanosine)-ribonucleoside in snoRNA + S-adenosyl-L-homocysteine + H(+). In terms of biological role, catalyzes the 2 serial methylation steps for the conversion of the 7-monomethylguanosine (m(7)G) caps of snRNAs and snoRNAs to a 2,2,7-trimethylguanosine (m(2,2,7)G) cap structure. The enzyme is specific for guanine, and N7 methylation must precede N2 methylation. Hypermethylation of the m7G cap of U snRNAs leads to their concentration in nuclear foci, their colocalization with coilin and the formation of canonical Cajal bodies (CBs). Plays a role in transcriptional regulation. The sequence is that of Trimethylguanosine synthase (TGS1) from Homo sapiens (Human).